Consider the following 388-residue polypeptide: MRYLTAGESHGPSLTTIIEGIPSGLELSSEVINLELKRRQGGYGRGARMTIENDKVSITSGVRHGKTTGAPITLIIENKDHKKWTDIMAVEDLPDKLKRKRKVIHPRPGHADLVGGIKYGYSDLRNALERSSARETAARVAVGAVAKCLLSQLGIETMHHVSVFGGVTIDIPETLTYEELRTKAQKSELSIVNSEQEVEIKTYIDQIKKDGDTLGGVVQTIVTGVPVGLGSYVQWDKKLDAKLAQAVMSINAFKGVEFGEGFAMGYQKGSEVMDEIIWSEEEGYSRKSNHLGGFEGGVTNGQPLLIKGVMKPIPTLYKPLQSVNIETHQPYKASVERSDPTALPAAGVVMENVVATVLAQEILEKFSSDTMKELTKAFQDYTNYTKRY.

2 residues coordinate NADP(+): Arg39 and Arg45. FMN contacts are provided by residues Arg130–Ser132, Asn251–Ala252, Gly296, Lys311–Thr315, and Arg337.

This sequence belongs to the chorismate synthase family. In terms of assembly, homotetramer. The cofactor is FMNH2.

The enzyme catalyses 5-O-(1-carboxyvinyl)-3-phosphoshikimate = chorismate + phosphate. The protein operates within metabolic intermediate biosynthesis; chorismate biosynthesis; chorismate from D-erythrose 4-phosphate and phosphoenolpyruvate: step 7/7. In terms of biological role, catalyzes the anti-1,4-elimination of the C-3 phosphate and the C-6 proR hydrogen from 5-enolpyruvylshikimate-3-phosphate (EPSP) to yield chorismate, which is the branch point compound that serves as the starting substrate for the three terminal pathways of aromatic amino acid biosynthesis. This reaction introduces a second double bond into the aromatic ring system. The protein is Chorismate synthase of Streptococcus uberis (strain ATCC BAA-854 / 0140J).